The sequence spans 352 residues: MGESERIPVGIIGASGYGGVQLVRLLLEHPQVEIAYLGGKGSAGKPYWDLYPHLSHLVNLTVEPIDLEVVASRCQVVFLGLPNGLACDMAPQLIAKGCKVLDLSADYRFRDLQTYTAWYNKDRSDTETAAKAVYGLPELYRTEIQSASLIGCPGCYPTASLMALSPLLKQGLILPETAIIDAKSGTSGGGRQEKIHLLLAEAEGSLGAYGVAKHRHTPEIEQVCSDLAGHEVKVQFTPHLIPMVRGILSTVYASLRDPGLVRDDILTIYSAFYRSSPFVKILPHGIYPQTKWAWGTNLCYIGIETDPRTDRVIVLSAIDNLMKGQAGQAVQCLNLMMGWEETLGLPQLSFYP.

C155 is an active-site residue.

Belongs to the NAGSA dehydrogenase family. Type 1 subfamily.

The protein resides in the cytoplasm. It catalyses the reaction N-acetyl-L-glutamate 5-semialdehyde + phosphate + NADP(+) = N-acetyl-L-glutamyl 5-phosphate + NADPH + H(+). It participates in amino-acid biosynthesis; L-arginine biosynthesis; N(2)-acetyl-L-ornithine from L-glutamate: step 3/4. Functionally, catalyzes the NADPH-dependent reduction of N-acetyl-5-glutamyl phosphate to yield N-acetyl-L-glutamate 5-semialdehyde. The chain is N-acetyl-gamma-glutamyl-phosphate reductase from Rippkaea orientalis (strain PCC 8801 / RF-1) (Cyanothece sp. (strain PCC 8801)).